A 404-amino-acid polypeptide reads, in one-letter code: MRTPMSDTQHVQSSLVSIRSSDKIEDAFRKMKVNETGVEELNPYPDRPGERDCQFYLRTGLCGYGSSCRYNHPTHLPQDVAYYKEELPERIGQPDCEYFLKTGACKYGPTCKYHHPKDRNGAQPVMFNVIGLPMRLGEKPCPYYLRTGTCRFGVACKFHHPQPDNGHSTAYGMSSFPAADLRYASGLTMMSTYGTLPRPQVPQSYVPILVSPSQGFLPPQGWAPYMAASNSMYNVKNQPYYSGSSASMAMAVALNRGLSESSDQPECRFFMNTGTCKYGDDCKYSHPGVRISQPPPSLINPFVLPARPGQPACGNFRSYGFCKFGPNCKFDHPMLPYPGLTMATSLPTPFASPVTTHQRISPTPNRSDSKSLSNGKPDVKKESSETEKPDNGEVQDLSEDASSP.

5 consecutive C3H1-type zinc fingers follow at residues 47–75 (RPGERDCQFYLRTGLCGYGSSCRYNHPTH), 90–118 (RIGQPDCEYFLKTGACKYGPTCKYHHPKD), 135–163 (RLGEKPCPYYLRTGTCRFGVACKFHHPQP), 261–289 (SSDQPECRFFMNTGTCKYGDDCKYSHPGV), and 307–335 (RPGQPACGNFRSYGFCKFGPNCKFDHPML). The span at 350 to 374 (FASPVTTHQRISPTPNRSDSKSLSN) shows a compositional bias: polar residues. The disordered stretch occupies residues 350 to 404 (FASPVTTHQRISPTPNRSDSKSLSNGKPDVKKESSETEKPDNGEVQDLSEDASSP). Basic and acidic residues predominate over residues 377–391 (PDVKKESSETEKPDN).

It is found in the nucleus. In terms of biological role, possesses RNA-binding and ribonuclease activities in vitro. The protein is Zinc finger CCCH domain-containing protein 3 of Arabidopsis thaliana (Mouse-ear cress).